We begin with the raw amino-acid sequence, 172 residues long: Scytalone dehydratase-like protein Arp1 (172 aa).

Y49 provides a ligand contact to substrate. Active-site residues include H84 and H109. A substrate-binding site is contributed by N130.

Belongs to the scytalone dehydratase family. In terms of assembly, homotrimer. Each subunit contains an active site, located in the central part of the hydrophobic core of the monomer, which functions independently.

Functionally, scytalone dehydratase-like protein; part of the Pks2 gene cluster that mediates the formation of infectious structures (appressoria), enabling these fungi to kill insects faster. The product of the Pks2 gene cluster is different from the one of Pks1 and has still not been identified. The polypeptide is Scytalone dehydratase-like protein Arp1 (Metarhizium robertsii (strain ARSEF 23 / ATCC MYA-3075) (Metarhizium anisopliae (strain ARSEF 23))).